The sequence spans 309 residues: Mitochondrial import receptor subunit TOM34 (309 aa).

Ser-8 carries the post-translational modification Phosphoserine. TPR repeat units follow at residues Val-9–Gln-42, Ser-51–Ser-84, and Lys-86–Val-118. Ser-160 bears the Phosphoserine mark. Positions Leu-161–Asp-189 are disordered. A compositionally biased stretch (basic and acidic residues) spans Glu-164 to Thr-178. At Ser-186 the chain carries Phosphoserine. TPR repeat units follow at residues Ala-193–Glu-226, Ser-227–Asn-260, and Lys-262–Asn-294. Residue Lys-197 forms a Glycyl lysine isopeptide (Lys-Gly) (interchain with G-Cter in SUMO2) linkage.

Belongs to the Tom34 family. As to quaternary structure, interacts with HSP90A, VCP, ATP6V1D, KIAA0665, AMPK, and DMAP1 through its TPR repeat. Ubiquitous.

It localises to the cytoplasm. The protein localises to the mitochondrion outer membrane. Functionally, plays a role in the import of cytosolically synthesized preproteins into mitochondria. Binds the mature portion of precursor proteins. Interacts with cellular components, and possesses weak ATPase activity. May be a chaperone-like protein that helps to keep newly synthesized precursors in an unfolded import compatible state. In Homo sapiens (Human), this protein is Mitochondrial import receptor subunit TOM34 (TOMM34).